The chain runs to 108 residues: Integration host factor subunit alpha (108 aa).

This sequence belongs to the bacterial histone-like protein family. Heterodimer of an alpha and a beta chain.

In terms of biological role, this protein is one of the two subunits of integration host factor, a specific DNA-binding protein that functions in genetic recombination as well as in transcriptional and translational control. This is Integration host factor subunit alpha from Methylorubrum populi (strain ATCC BAA-705 / NCIMB 13946 / BJ001) (Methylobacterium populi).